Reading from the N-terminus, the 49-residue chain is FFECTLECDIKKEGKPCKPKGCKCNDKDNKDHKKCSGGWRCKLKLCLKF.

4 cysteine pairs are disulfide-bonded: cysteine 4–cysteine 17, cysteine 8–cysteine 41, cysteine 22–cysteine 24, and cysteine 35–cysteine 46.

As to expression, expressed by the venom gland.

The protein resides in the secreted. Toxin that causes irreversible contractile paralysis into adult Aedes aegypti resulting in 100% mortality after 24 hours. This chain is U1-theraphotoxin-Lp1b, found in Lasiodora parahybana (Brazilian salmon pink birdeater).